A 177-amino-acid polypeptide reads, in one-letter code: ATP synthase subunit delta (177 aa).

It belongs to the ATPase delta chain family. In terms of assembly, F-type ATPases have 2 components, F(1) - the catalytic core - and F(0) - the membrane proton channel. F(1) has five subunits: alpha(3), beta(3), gamma(1), delta(1), epsilon(1). F(0) has three main subunits: a(1), b(2) and c(10-14). The alpha and beta chains form an alternating ring which encloses part of the gamma chain. F(1) is attached to F(0) by a central stalk formed by the gamma and epsilon chains, while a peripheral stalk is formed by the delta and b chains.

It localises to the cell inner membrane. Functionally, f(1)F(0) ATP synthase produces ATP from ADP in the presence of a proton or sodium gradient. F-type ATPases consist of two structural domains, F(1) containing the extramembraneous catalytic core and F(0) containing the membrane proton channel, linked together by a central stalk and a peripheral stalk. During catalysis, ATP synthesis in the catalytic domain of F(1) is coupled via a rotary mechanism of the central stalk subunits to proton translocation. In terms of biological role, this protein is part of the stalk that links CF(0) to CF(1). It either transmits conformational changes from CF(0) to CF(1) or is implicated in proton conduction. This is ATP synthase subunit delta from Shewanella sp. (strain MR-4).